A 264-amino-acid polypeptide reads, in one-letter code: 3-methyl-2-oxobutanoate hydroxymethyltransferase (264 aa).

Mg(2+)-binding residues include Asp-45 and Asp-84. 3-methyl-2-oxobutanoate-binding positions include 45 to 46 (DS), Asp-84, and Lys-112. Residue Glu-114 participates in Mg(2+) binding. Glu-181 acts as the Proton acceptor in catalysis.

The protein belongs to the PanB family. Homodecamer; pentamer of dimers. It depends on Mg(2+) as a cofactor.

It localises to the cytoplasm. It carries out the reaction 3-methyl-2-oxobutanoate + (6R)-5,10-methylene-5,6,7,8-tetrahydrofolate + H2O = 2-dehydropantoate + (6S)-5,6,7,8-tetrahydrofolate. The protein operates within cofactor biosynthesis; (R)-pantothenate biosynthesis; (R)-pantoate from 3-methyl-2-oxobutanoate: step 1/2. Its function is as follows. Catalyzes the reversible reaction in which hydroxymethyl group from 5,10-methylenetetrahydrofolate is transferred onto alpha-ketoisovalerate to form ketopantoate. The protein is 3-methyl-2-oxobutanoate hydroxymethyltransferase of Escherichia coli (strain K12 / MC4100 / BW2952).